We begin with the raw amino-acid sequence, 313 residues long: Porphobilinogen deaminase (313 aa).

Cys-243 is subject to S-(dipyrrolylmethanemethyl)cysteine.

The protein belongs to the HMBS family. As to quaternary structure, monomer. It depends on dipyrromethane as a cofactor.

It catalyses the reaction 4 porphobilinogen + H2O = hydroxymethylbilane + 4 NH4(+). It participates in porphyrin-containing compound metabolism; protoporphyrin-IX biosynthesis; coproporphyrinogen-III from 5-aminolevulinate: step 2/4. Tetrapolymerization of the monopyrrole PBG into the hydroxymethylbilane pre-uroporphyrinogen in several discrete steps. This chain is Porphobilinogen deaminase, found in Bordetella petrii (strain ATCC BAA-461 / DSM 12804 / CCUG 43448).